The chain runs to 185 residues: Elongation factor P (185 aa).

This sequence belongs to the elongation factor P family.

The protein resides in the cytoplasm. The protein operates within protein biosynthesis; polypeptide chain elongation. Functionally, involved in peptide bond synthesis. Stimulates efficient translation and peptide-bond synthesis on native or reconstituted 70S ribosomes in vitro. Probably functions indirectly by altering the affinity of the ribosome for aminoacyl-tRNA, thus increasing their reactivity as acceptors for peptidyl transferase. The chain is Elongation factor P from Burkholderia vietnamiensis (strain G4 / LMG 22486) (Burkholderia cepacia (strain R1808)).